A 198-amino-acid chain; its full sequence is FMN-dependent NADH:quinone oxidoreductase 6 (198 aa).

96-99 (MYNF) serves as a coordination point for FMN.

Belongs to the azoreductase type 1 family. Homodimer. FMN is required as a cofactor.

The enzyme catalyses 2 a quinone + NADH + H(+) = 2 a 1,4-benzosemiquinone + NAD(+). It carries out the reaction N,N-dimethyl-1,4-phenylenediamine + anthranilate + 2 NAD(+) = 2-(4-dimethylaminophenyl)diazenylbenzoate + 2 NADH + 2 H(+). In terms of biological role, quinone reductase that provides resistance to thiol-specific stress caused by electrophilic quinones. Its function is as follows. Also exhibits azoreductase activity. Catalyzes the reductive cleavage of the azo bond in aromatic azo compounds to the corresponding amines. This Burkholderia lata (strain ATCC 17760 / DSM 23089 / LMG 22485 / NCIMB 9086 / R18194 / 383) protein is FMN-dependent NADH:quinone oxidoreductase 6.